Reading from the N-terminus, the 157-residue chain is MPDLFAYTDGACSGNPGPGGWGALLRAMDGETVLKERELKGGEKETTNNRMELLAAIHALESLARPSKITVVTDSAYVKNGVTGWIFGWKKNGWKTSAKKPVKNVELWQRLDAAQSRHDVTWEWVKGHAGHPENERADELARAGMAPFKSSGKSSKG.

In terms of domain architecture, RNase H type-1 spans 1–146; the sequence is MPDLFAYTDG…ADELARAGMA (146 aa). Mg(2+) contacts are provided by Asp9, Glu52, Asp74, and Asp138.

It belongs to the RNase H family. Monomer. It depends on Mg(2+) as a cofactor.

Its subcellular location is the cytoplasm. The catalysed reaction is Endonucleolytic cleavage to 5'-phosphomonoester.. In terms of biological role, endonuclease that specifically degrades the RNA of RNA-DNA hybrids. The chain is Ribonuclease H from Ruegeria sp. (strain TM1040) (Silicibacter sp.).